The following is a 537-amino-acid chain: ATP synthase subunit alpha (537 aa).

171 to 178 provides a ligand contact to ATP; sequence GDRQTGKT.

This sequence belongs to the ATPase alpha/beta chains family. As to quaternary structure, F-type ATPases have 2 components, CF(1) - the catalytic core - and CF(0) - the membrane proton channel. CF(1) has five subunits: alpha(3), beta(3), gamma(1), delta(1), epsilon(1). CF(0) has four main subunits: a, b, b' and c.

It is found in the cell inner membrane. The catalysed reaction is ATP + H2O + 4 H(+)(in) = ADP + phosphate + 5 H(+)(out). In terms of biological role, produces ATP from ADP in the presence of a proton gradient across the membrane. The alpha chain is a regulatory subunit. The chain is ATP synthase subunit alpha from Chloroherpeton thalassium (strain ATCC 35110 / GB-78).